Reading from the N-terminus, the 255-residue chain is F-box only protein 44 (255 aa).

Residues 3-50 form the F-box domain; that stretch reads VGNINELPENILLELFTHVPARQLLLNCRLVCSLWRDLIDLVTLWKRK. Residues 71 to 252 form the FBA domain; the sequence is FYFLRSLHRN…VTNSSITIGP (182 aa).

As to quaternary structure, part of a SCF (SKP1-cullin-F-box) protein ligase complex. Interacts with SKP1 and CUL1. In terms of tissue distribution, abundantly expressed in brain and kidney. Expressed at lower levels in heart, spleen and liver.

Functionally, substrate-recognition component of the SCF (SKP1-CUL1-F-box protein)-type E3 ubiquitin ligase complex. This is F-box only protein 44 (FBXO44) from Homo sapiens (Human).